A 1524-amino-acid chain; its full sequence is DNA-directed RNA polymerase subunit beta' (1524 aa).

Residues cysteine 58, cysteine 60, cysteine 73, and cysteine 76 each contribute to the Zn(2+) site. Mg(2+)-binding residues include aspartate 739, aspartate 741, and aspartate 743. Residues cysteine 1112, cysteine 1194, cysteine 1201, and cysteine 1204 each coordinate Zn(2+). Residues glutamate 1501–alanine 1524 form a disordered region.

The protein belongs to the RNA polymerase beta' chain family. The RNAP catalytic core consists of 2 alpha, 1 beta, 1 beta' and 1 omega subunit. When a sigma factor is associated with the core the holoenzyme is formed, which can initiate transcription. Mg(2+) is required as a cofactor. Requires Zn(2+) as cofactor.

It catalyses the reaction RNA(n) + a ribonucleoside 5'-triphosphate = RNA(n+1) + diphosphate. Its function is as follows. DNA-dependent RNA polymerase catalyzes the transcription of DNA into RNA using the four ribonucleoside triphosphates as substrates. The polypeptide is DNA-directed RNA polymerase subunit beta' (Thermus thermophilus (strain ATCC BAA-163 / DSM 7039 / HB27)).